The chain runs to 562 residues: MNNHIRPLYIPYAGPALLSTPLLNKGSAFSTTERKYFNLEGLLPEAIESIEEQTGRAYKQYQSFENDMDKHIYLRNIQDTNETLFYRLVQNHISEMMPIIYTPTVGAACENFSNIYRRGRGLFISYENKNRIDDLLNNAANQNVKVIVVTDGERILGLGDQGIGGMGIPIGKLALYTACGGISPAHTLPIVLDVGTNNPQRLADPMYMGWRHPRVTGNEYKDFVEEFIQAVQRRWPQALVQFEDFAQKNAMPLLERYKNRICCFNDDIQGTAAVTVGSLLAACKAAGSSLAQQRVTFLGAGSAGCGIAEAIIAQMVSEGISDAQARSQVYMVDRWGLLQEGMPNLLDFQQRLVQKAENTKEWVSEEPNYSLFDVMHNAKPTVLIGVSGAPGLFSKEVIQEMHKHCERPIVFPLSNPTSRVEATPNDIIRWTDGQALVATGSPFDPVTHNGQTYPIAQCNNSFIFPGIGLGVLAIKATRVSDEMLRESSRALSECSPLAINGSGALLPPLEEIHTVSKKIAFAVAKKAIEQGYALEITDEALMQKIEQYFWKPVYRRYKRTAF.

The active-site Proton donor is the Tyr-101. Position 154 (Arg-154) interacts with NAD(+). The Proton acceptor role is filled by Lys-172. The a divalent metal cation site is built by Glu-243, Asp-244, and Asp-267. Residues Asp-267 and Asn-415 each contribute to the NAD(+) site.

It belongs to the malic enzymes family. Homotetramer. Mg(2+) is required as a cofactor. Mn(2+) serves as cofactor.

It carries out the reaction (S)-malate + NAD(+) = pyruvate + CO2 + NADH. The catalysed reaction is oxaloacetate + H(+) = pyruvate + CO2. The sequence is that of NAD-dependent malic enzyme from Aliivibrio salmonicida (strain LFI1238) (Vibrio salmonicida (strain LFI1238)).